The chain runs to 360 residues: Alanine racemase (360 aa).

Residue Lys36 is the Proton acceptor; specific for D-alanine of the active site. Lys36 carries the N6-(pyridoxal phosphate)lysine modification. Arg132 provides a ligand contact to substrate. The active-site Proton acceptor; specific for L-alanine is the Tyr256. Met304 lines the substrate pocket.

The protein belongs to the alanine racemase family. Requires pyridoxal 5'-phosphate as cofactor.

It catalyses the reaction L-alanine = D-alanine. Its pathway is amino-acid biosynthesis; D-alanine biosynthesis; D-alanine from L-alanine: step 1/1. In terms of biological role, catalyzes the interconversion of L-alanine and D-alanine. May also act on other amino acids. This is Alanine racemase (alr) from Haemophilus influenzae (strain ATCC 51907 / DSM 11121 / KW20 / Rd).